The primary structure comprises 299 residues: Zinc import ATP-binding protein ZnuC (299 aa).

Positions 13–228 (VSLANAGVQR…PEYMRLFGGT (216 aa)) constitute an ABC transporter domain. 45-52 (GPNGSGKS) serves as a coordination point for ATP.

Belongs to the ABC transporter superfamily. Zinc importer (TC 3.A.1.15.5) family. As to quaternary structure, the complex is composed of two ATP-binding proteins (ZnuC), two transmembrane proteins (ZnuB) and a solute-binding protein (ZnuA).

It localises to the cell inner membrane. The enzyme catalyses Zn(2+)(out) + ATP(in) + H2O(in) = Zn(2+)(in) + ADP(in) + phosphate(in) + H(+)(in). Part of the ABC transporter complex ZnuABC involved in zinc import. Responsible for energy coupling to the transport system. The protein is Zinc import ATP-binding protein ZnuC of Agrobacterium fabrum (strain C58 / ATCC 33970) (Agrobacterium tumefaciens (strain C58)).